A 397-amino-acid polypeptide reads, in one-letter code: Elongation factor Tu (397 aa).

The 198-residue stretch at 10–207 (KPHVNVGTIG…TLDSYIPEPV (198 aa)) folds into the tr-type G domain. Residues 19–26 (GHVDHGKT) form a G1 region. 19-26 (GHVDHGKT) serves as a coordination point for GTP. T26 contributes to the Mg(2+) binding site. The G2 stretch occupies residues 60-64 (GITIN). At Y77 the chain carries Phosphotyrosine. Positions 81–84 (DCPG) are G3. 81–85 (DCPGH) provides a ligand contact to GTP. Y88 bears the Phosphotyrosine mark. 136–139 (NKAD) provides a ligand contact to GTP. A G4 region spans residues 136 to 139 (NKAD). The tract at residues 174–176 (SAL) is G5.

This sequence belongs to the TRAFAC class translation factor GTPase superfamily. Classic translation factor GTPase family. EF-Tu/EF-1A subfamily. Monomer.

The protein resides in the cytoplasm. The enzyme catalyses GTP + H2O = GDP + phosphate + H(+). Its function is as follows. GTP hydrolase that promotes the GTP-dependent binding of aminoacyl-tRNA to the A-site of ribosomes during protein biosynthesis. The polypeptide is Elongation factor Tu (Pseudomonas aeruginosa (strain UCBPP-PA14)).